A 125-amino-acid chain; its full sequence is Late expression factor 11 (125 aa).

This sequence belongs to the baculoviridae LEF-11 family.

Its function is as follows. Involved in late/very late gene activation. In Orgyia pseudotsugata multicapsid polyhedrosis virus (OpMNPV), this protein is Late expression factor 11 (LEF-11).